The sequence spans 251 residues: Flap endonuclease Xni (251 aa).

Asp-104 provides a ligand contact to Mg(2+). Residues 160–249 form the 5'-3' exonuclease domain; the sequence is VLPRQLPDYW…IDGNLQQLRL (90 aa). Leu-171, Ala-172, Pro-180, Val-182, and Ile-185 together coordinate K(+). The interval 184-189 is interaction with DNA; sequence GIGPKS.

The protein belongs to the Xni family. The cofactor is Mg(2+). It depends on K(+) as a cofactor.

In terms of biological role, has flap endonuclease activity. During DNA replication, flap endonucleases cleave the 5'-overhanging flap structure that is generated by displacement synthesis when DNA polymerase encounters the 5'-end of a downstream Okazaki fragment. This Salmonella newport (strain SL254) protein is Flap endonuclease Xni.